The chain runs to 837 residues: Tuftelin-interacting protein 11 (837 aa).

Basic and acidic residues-rich tracts occupy residues 1–13 and 53–64; these read MSLSHLYRDGEGR and VWAERDSDDERP. Disordered regions lie at residues 1–21, 53–72, and 85–133; these read MSLSHLYRDGEGRIDDDDDER, VWAERDSDDERPSFGGKRAR, and LKKG…KGFA. The segment at 1–50 is required for interaction with DHX15; it reads MSLSHLYRDGEGRIDDDDDERENFEITDWDLQNEFNPNRQRHWQTKEEAT. Phosphoserine occurs at positions 2, 59, and 98. The segment covering 91–102 has biased composition (acidic residues); that stretch reads EEAELEDSDDEE. Residues 103-116 are compositionally biased toward basic and acidic residues; the sequence is KPVKQDDFPKDFGP. A Phosphoserine modification is found at serine 144. One can recognise a G-patch domain in the interval 149–195; that stretch reads TKGIGQKLLQKMGYVPGRGLGKNAQGIINPIEAKQRKGKGAVGAYGS. The interval 179 to 236 is disordered; the sequence is IEAKQRKGKGAVGAYGSERTTQSMQDFPVVDSEEEAEEEFQKELSQWRKDPSGSKKKP. The residue at position 210 (serine 210) is a Phosphoserine. The span at 217–231 shows a compositional bias: basic and acidic residues; it reads EFQKELSQWRKDPSG. The Nuclear localization signal motif lies at 700 to 705; the sequence is VKDKFN. Positions 710 to 734 are required for nuclear speckle localization; the sequence is IMNRAVSSNVGAYMQPGARENIAYL.

The protein belongs to the TFP11/STIP family. Identified in the spliceosome C complex. Found in the Intron Large (IL) complex, a post-mRNA release spliceosomal complex containing the excised intron, U2, U5 and U6 snRNPs, and splicing factors. Interacts with TUFT1. Interacts with DHX15; indicative for a recruitment of DHX15 to the IL complex. Interacts with GCFC2.

It localises to the cytoplasm. The protein localises to the nucleus. Its function is as follows. Involved in pre-mRNA splicing, specifically in spliceosome disassembly during late-stage splicing events. Intron turnover seems to proceed through reactions in two lariat-intron associated complexes termed Intron Large (IL) and Intron Small (IS). In cooperation with DHX15 seems to mediate the transition of the U2, U5 and U6 snRNP-containing IL complex to the snRNP-free IS complex leading to efficient debranching and turnover of excised introns. May play a role in the differentiation of ameloblasts and odontoblasts or in the forming of the enamel extracellular matrix. The sequence is that of Tuftelin-interacting protein 11 (TFIP11) from Pan troglodytes (Chimpanzee).